The following is a 450-amino-acid chain: Putative mediator of RNA polymerase II transcription subunit 27 (450 aa).

Positions 15 to 118 (QQQQAQQHQQ…QKLKKSMDLV (104 aa)) form a coiled coil.

The protein belongs to the Mediator complex subunit 27 family. In terms of assembly, component of the Mediator complex.

It localises to the nucleus. In terms of biological role, component of the Mediator complex, a coactivator involved in the regulated transcription of nearly all RNA polymerase II-dependent genes. Mediator functions as a bridge to convey information from gene-specific regulatory proteins to the basal RNA polymerase II transcription machinery. Mediator is recruited to promoters by direct interactions with regulatory proteins and serves as a scaffold for the assembly of a functional preinitiation complex with RNA polymerase II and the general transcription factors. This is Putative mediator of RNA polymerase II transcription subunit 27 (med27) from Dictyostelium discoideum (Social amoeba).